We begin with the raw amino-acid sequence, 381 residues long: Probable tRNA sulfurtransferase (381 aa).

A THUMP domain is found at 68–176 (DLALKLLKKV…NDGAYIFTEK (109 aa)). ATP contacts are provided by residues 194 to 195 (LI), Lys276, Gly298, and Gln307.

This sequence belongs to the ThiI family.

The protein localises to the cytoplasm. It carries out the reaction [ThiI sulfur-carrier protein]-S-sulfanyl-L-cysteine + a uridine in tRNA + 2 reduced [2Fe-2S]-[ferredoxin] + ATP + H(+) = [ThiI sulfur-carrier protein]-L-cysteine + a 4-thiouridine in tRNA + 2 oxidized [2Fe-2S]-[ferredoxin] + AMP + diphosphate. The catalysed reaction is [ThiS sulfur-carrier protein]-C-terminal Gly-Gly-AMP + S-sulfanyl-L-cysteinyl-[cysteine desulfurase] + AH2 = [ThiS sulfur-carrier protein]-C-terminal-Gly-aminoethanethioate + L-cysteinyl-[cysteine desulfurase] + A + AMP + 2 H(+). It participates in cofactor biosynthesis; thiamine diphosphate biosynthesis. In terms of biological role, catalyzes the ATP-dependent transfer of a sulfur to tRNA to produce 4-thiouridine in position 8 of tRNAs, which functions as a near-UV photosensor. Also catalyzes the transfer of sulfur to the sulfur carrier protein ThiS, forming ThiS-thiocarboxylate. This is a step in the synthesis of thiazole, in the thiamine biosynthesis pathway. The sulfur is donated as persulfide by IscS. This Methanocaldococcus jannaschii (strain ATCC 43067 / DSM 2661 / JAL-1 / JCM 10045 / NBRC 100440) (Methanococcus jannaschii) protein is Probable tRNA sulfurtransferase.